The primary structure comprises 114 residues: MAQGQGFGFGLGKIKELQDAFQKAQQVQQGAKVLQEELENMEIPGQSENGLVTVYLSGNQEPRGIEIDPALLSQDLEIVAGSILEAMKVAYDASTETMRSKMEELTSGLNIPSM.

This sequence belongs to the YbaB/EbfC family. As to quaternary structure, homodimer.

The protein localises to the cytoplasm. The protein resides in the nucleoid. In terms of biological role, binds to DNA and alters its conformation. May be involved in regulation of gene expression, nucleoid organization and DNA protection. This is Nucleoid-associated protein MAE_23910 from Microcystis aeruginosa (strain NIES-843 / IAM M-2473).